Here is a 214-residue protein sequence, read N- to C-terminus: Thymidylate kinase (214 aa).

13–20 (GPDACGKS) lines the ATP pocket.

The protein belongs to the thymidylate kinase family.

The enzyme catalyses dTMP + ATP = dTDP + ADP. Its function is as follows. Phosphorylation of dTMP to form dTDP in both de novo and salvage pathways of dTTP synthesis. The chain is Thymidylate kinase from Malacoplasma penetrans (strain HF-2) (Mycoplasma penetrans).